Reading from the N-terminus, the 213-residue chain is Superoxide dismutase [Fe] (213 aa).

Positions 26, 73, 156, and 160 each coordinate Fe cation.

It belongs to the iron/manganese superoxide dismutase family. Homodimer. Fe cation serves as cofactor.

The enzyme catalyses 2 superoxide + 2 H(+) = H2O2 + O2. Functionally, destroys superoxide anion radicals which are normally produced within the cells and which are toxic to biological systems. In Helicobacter pylori (strain J99 / ATCC 700824) (Campylobacter pylori J99), this protein is Superoxide dismutase [Fe] (sodB).